The following is a 1755-amino-acid chain: Transposon Ty1-MR2 Gag-Pol polyprotein (1755 aa).

Composition is skewed to polar residues over residues 1 to 10 (MESQQLSNYP), 48 to 60 (TKANSQQTTTPAS), and 127 to 152 (QSQFPQYPSSVGTPLSTPSPESGNTF). Disordered regions lie at residues 1 to 93 (MESQ…MMTQ), 126 to 173 (PQSQ…RPPP), and 352 to 421 (GSRN…SKST). Residues 153–165 (TDSSSADSDMTST) show a composition bias toward low complexity. Residues 299–401 (NNGIHINNKV…NSKSKTARAH (103 aa)) are RNA-binding. Positions 402–418 (NVSTSNNSPSTDNDSIS) are enriched in low complexity. Ser-416 is subject to Phosphoserine. Residue Asp-461 is the For protease activity; shared with dimeric partner of the active site. An integrase-type zinc finger-like region spans residues 583 to 640 (NVHTSESTRKYPYPFIHRMLAHANAQTIRYSLKNNTITYFNESDVDWSSAIDYQCPDC). The Integrase catalytic domain occupies 660–835 (NSYEPFQYLH…AGLDISTLLP (176 aa)). Residues Asp-671 and Asp-736 each contribute to the Mg(2+) site. Disordered regions lie at residues 956 to 1087 (SKAV…ETEK), 1092 to 1111 (RSPSIDASPPENNSSHNIVP), and 1130 to 1186 (DLPL…EDNE). Over residues 960 to 969 (SPTDSTPPST) the composition is skewed to low complexity. A compositionally biased stretch (polar residues) spans 1005–1015 (STPQISNIEST). A compositionally biased stretch (basic and acidic residues) spans 1038–1053 (ESSHASKSKDFRHSDS). Polar residues-rich tracts occupy residues 1054–1082 (YSENETNHTNVPISSTGGTNNKTVPQISD) and 1101–1111 (PENNSSHNIVP). Positions 1178 to 1212 (KKRSLEDNETEIKVSRDTWNTKNMRSLEPPRSKKR) match the Bipartite nuclear localization signal motif. The Reverse transcriptase Ty1/copia-type domain occupies 1338–1476 (NNYYITQLDI…DILGLEIKYQ (139 aa)). Positions 1346, 1427, 1428, 1610, 1652, and 1685 each coordinate Mg(2+). Residues 1610 to 1752 (DASYGNQPYY…IKTFKLLTNK (143 aa)) form the RNase H Ty1/copia-type domain.

The capsid protein forms a homotrimer, from which the VLPs are assembled. The protease is a homodimer, whose active site consists of two apposed aspartic acid residues. Initially, virus-like particles (VLPs) are composed of the structural unprocessed proteins Gag and Gag-Pol, and also contain the host initiator methionine tRNA (tRNA(i)-Met) which serves as a primer for minus-strand DNA synthesis, and a dimer of genomic Ty RNA. Processing of the polyproteins occurs within the particle and proceeds by an ordered pathway, called maturation. First, the protease (PR) is released by autocatalytic cleavage of the Gag-Pol polyprotein yielding capsid protein p45 and a Pol-p154 precursor protein. This cleavage is a prerequisite for subsequent processing of Pol-p154 at the remaining sites to release the mature structural and catalytic proteins. Maturation takes place prior to the RT reaction and is required to produce transposition-competent VLPs.

It is found in the cytoplasm. The protein localises to the nucleus. The catalysed reaction is DNA(n) + a 2'-deoxyribonucleoside 5'-triphosphate = DNA(n+1) + diphosphate. The enzyme catalyses Endonucleolytic cleavage to 5'-phosphomonoester.. Functionally, capsid protein (CA) is the structural component of the virus-like particle (VLP), forming the shell that encapsulates the retrotransposons dimeric RNA genome. The particles are assembled from trimer-clustered units and there are holes in the capsid shells that allow for the diffusion of macromolecules. CA also has nucleocapsid-like chaperone activity, promoting primer tRNA(i)-Met annealing to the multipartite primer-binding site (PBS), dimerization of Ty1 RNA and initiation of reverse transcription. In terms of biological role, the aspartyl protease (PR) mediates the proteolytic cleavages of the Gag and Gag-Pol polyproteins after assembly of the VLP. Its function is as follows. Reverse transcriptase/ribonuclease H (RT) is a multifunctional enzyme that catalyzes the conversion of the retro-elements RNA genome into dsDNA within the VLP. The enzyme displays a DNA polymerase activity that can copy either DNA or RNA templates, and a ribonuclease H (RNase H) activity that cleaves the RNA strand of RNA-DNA heteroduplexes during plus-strand synthesis and hydrolyzes RNA primers. The conversion leads to a linear dsDNA copy of the retrotransposon that includes long terminal repeats (LTRs) at both ends. Integrase (IN) targets the VLP to the nucleus, where a subparticle preintegration complex (PIC) containing at least integrase and the newly synthesized dsDNA copy of the retrotransposon must transit the nuclear membrane. Once in the nucleus, integrase performs the integration of the dsDNA into the host genome. The protein is Transposon Ty1-MR2 Gag-Pol polyprotein (TY1B-MR2) of Saccharomyces cerevisiae (strain ATCC 204508 / S288c) (Baker's yeast).